We begin with the raw amino-acid sequence, 503 residues long: Lysine--tRNA ligase (503 aa).

Mg(2+) contacts are provided by glutamate 414 and glutamate 421.

It belongs to the class-II aminoacyl-tRNA synthetase family. Homodimer. The cofactor is Mg(2+).

Its subcellular location is the cytoplasm. The enzyme catalyses tRNA(Lys) + L-lysine + ATP = L-lysyl-tRNA(Lys) + AMP + diphosphate. This Laribacter hongkongensis (strain HLHK9) protein is Lysine--tRNA ligase.